Reading from the N-terminus, the 313-residue chain is 4-hydroxy-3-methylbut-2-enyl diphosphate reductase (313 aa).

Cysteine 12 contacts [4Fe-4S] cluster. (2E)-4-hydroxy-3-methylbut-2-enyl diphosphate is bound by residues histidine 41 and histidine 74. The dimethylallyl diphosphate site is built by histidine 41 and histidine 74. Residues histidine 41 and histidine 74 each coordinate isopentenyl diphosphate. [4Fe-4S] cluster is bound at residue cysteine 96. Histidine 124 provides a ligand contact to (2E)-4-hydroxy-3-methylbut-2-enyl diphosphate. Histidine 124 provides a ligand contact to dimethylallyl diphosphate. An isopentenyl diphosphate-binding site is contributed by histidine 124. Residue glutamate 126 is the Proton donor of the active site. Threonine 167 contributes to the (2E)-4-hydroxy-3-methylbut-2-enyl diphosphate binding site. Cysteine 197 is a binding site for [4Fe-4S] cluster. (2E)-4-hydroxy-3-methylbut-2-enyl diphosphate contacts are provided by serine 225, serine 226, asparagine 227, and serine 269. Serine 225, serine 226, asparagine 227, and serine 269 together coordinate dimethylallyl diphosphate. Isopentenyl diphosphate-binding residues include serine 225, serine 226, asparagine 227, and serine 269.

This sequence belongs to the IspH family. It depends on [4Fe-4S] cluster as a cofactor.

It catalyses the reaction isopentenyl diphosphate + 2 oxidized [2Fe-2S]-[ferredoxin] + H2O = (2E)-4-hydroxy-3-methylbut-2-enyl diphosphate + 2 reduced [2Fe-2S]-[ferredoxin] + 2 H(+). The catalysed reaction is dimethylallyl diphosphate + 2 oxidized [2Fe-2S]-[ferredoxin] + H2O = (2E)-4-hydroxy-3-methylbut-2-enyl diphosphate + 2 reduced [2Fe-2S]-[ferredoxin] + 2 H(+). It functions in the pathway isoprenoid biosynthesis; dimethylallyl diphosphate biosynthesis; dimethylallyl diphosphate from (2E)-4-hydroxy-3-methylbutenyl diphosphate: step 1/1. Its pathway is isoprenoid biosynthesis; isopentenyl diphosphate biosynthesis via DXP pathway; isopentenyl diphosphate from 1-deoxy-D-xylulose 5-phosphate: step 6/6. In terms of biological role, catalyzes the conversion of 1-hydroxy-2-methyl-2-(E)-butenyl 4-diphosphate (HMBPP) into a mixture of isopentenyl diphosphate (IPP) and dimethylallyl diphosphate (DMAPP). Acts in the terminal step of the DOXP/MEP pathway for isoprenoid precursor biosynthesis. The chain is 4-hydroxy-3-methylbut-2-enyl diphosphate reductase from Methylococcus capsulatus (strain ATCC 33009 / NCIMB 11132 / Bath).